The following is a 478-amino-acid chain: Putative malate transporter YflS (478 aa).

12 helical membrane passes run 12–31 (AVKLVPLLITVAVGLIIWFI), 41–57 (AWHLFAIFVATIIGFIS), 64–81 (AIAIFALAVTALTGTLSI), 96–118 (IVIAFFISRGFIKTGLGARISYV), 187–209 (GFQGNLITSAMFLTAMAANPLIA), 222–244 (WTSWAIAAIVPGLVSLIITPLVI), 277–296 (LSMVIVFLLVLVLWIFGGSF), 300–319 (ATTTALIGLAVLLLSQVLTW), 332–354 (LTWFAALVMLANFLNELGMVSWF), 364–386 (GFSWIVAFIILIVVYYYSHYFFA), 398–420 (AFLAVVVAAGAPPLLAALSLAFI), and 450–472 (WSIGFILSIVHIIVWLVIGGLWW).

Belongs to the SLC13A/DASS transporter (TC 2.A.47) family. DIT1 subfamily.

The protein resides in the cell membrane. In terms of biological role, might be a malate transporter. The protein is Putative malate transporter YflS (yflS) of Bacillus subtilis (strain 168).